Consider the following 518-residue polypeptide: GMP synthase [glutamine-hydrolyzing] (518 aa).

In terms of domain architecture, Glutamine amidotransferase type-1 spans 6 to 200 (RLLIIDFGSQ…FVRLAGFKGD (195 aa)). Residue cysteine 84 is the Nucleophile of the active site. Active-site residues include histidine 175 and glutamate 177. A GMPS ATP-PPase domain is found at 201–393 (WTMGAYREEA…LGLPESFIGR (193 aa)). 228–234 (SGGVDSS) provides a ligand contact to ATP.

As to quaternary structure, homodimer.

It catalyses the reaction XMP + L-glutamine + ATP + H2O = GMP + L-glutamate + AMP + diphosphate + 2 H(+). Its pathway is purine metabolism; GMP biosynthesis; GMP from XMP (L-Gln route): step 1/1. In terms of biological role, catalyzes the synthesis of GMP from XMP. The chain is GMP synthase [glutamine-hydrolyzing] from Cereibacter sphaeroides (strain ATCC 17029 / ATH 2.4.9) (Rhodobacter sphaeroides).